We begin with the raw amino-acid sequence, 445 residues long: UDP-N-acetylmuramate--L-alanine ligase (445 aa).

108–114 (GSDGKTT) provides a ligand contact to ATP.

The protein belongs to the MurCDEF family.

The protein localises to the cytoplasm. The catalysed reaction is UDP-N-acetyl-alpha-D-muramate + L-alanine + ATP = UDP-N-acetyl-alpha-D-muramoyl-L-alanine + ADP + phosphate + H(+). It participates in cell wall biogenesis; peptidoglycan biosynthesis. Cell wall formation. This Pseudothermotoga lettingae (strain ATCC BAA-301 / DSM 14385 / NBRC 107922 / TMO) (Thermotoga lettingae) protein is UDP-N-acetylmuramate--L-alanine ligase.